The primary structure comprises 264 residues: Apolipoprotein A-I (264 aa).

Positions 1-18 are cleaved as a signal peptide; sequence MKAVVLAVAVLFLTGSQA. 2 tandem repeats follow at residues 67–88 and 89–110. Positions 67–264 are 10 X approximate tandem repeats; that stretch reads LKLVDNWDTV…DETSKRLSTQ (198 aa). Residue M109 is modified to Methionine sulfoxide. The stretch at 111–121 is one 3; half-length repeat; sequence KDLEEVKKQVQ. 3 tandem repeats follow at residues 122-143, 144-165, and 166-187. Residues 188–207 form a 7; truncated repeat; it reads PYSDKMRERLAQHLAKLKDS. Methionine sulfoxide is present on M193. Residues 208-229 form repeat 8; the sequence is TTLAEYRTKASNHLQTLSEKAK. Residues 230-240 form a 9; half-length repeat; it reads PALEDLRQGLT. Repeat 10 spans residues 241 to 264; the sequence is PMLESFRATIMGWIDETSKRLSTQ. M242 carries the post-translational modification Methionine sulfoxide.

This sequence belongs to the apolipoprotein A1/A4/E family. In terms of assembly, homodimer. Interacts with APOA1BP and CLU. Component of a sperm activating protein complex (SPAP), consisting of APOA1, an immunoglobulin heavy chain, an immunoglobulin light chain and albumin. Interacts with NDRG1. Interacts with SCGB3A2. Interacts with NAXE and YJEFN3. Glycosylated. Post-translationally, palmitoylated. In terms of processing, phosphorylation sites are present in the extracellular medium.

The protein localises to the secreted. Participates in the reverse transport of cholesterol from tissues to the liver for excretion by promoting cholesterol efflux from tissues and by acting as a cofactor for the lecithin cholesterol acyltransferase (LCAT). As part of the SPAP complex, activates spermatozoa motility. This chain is Apolipoprotein A-I (Apoa1), found in Peromyscus maniculatus bairdii (Prairie deer mouse).